A 264-amino-acid chain; its full sequence is 3-methyl-2-oxobutanoate hydroxymethyltransferase (264 aa).

2 residues coordinate Mg(2+): D45 and D84. 3-methyl-2-oxobutanoate contacts are provided by residues 45–46 (DS), D84, and K112. E114 contributes to the Mg(2+) binding site. The Proton acceptor role is filled by E181.

This sequence belongs to the PanB family. Homodecamer; pentamer of dimers. It depends on Mg(2+) as a cofactor.

The protein resides in the cytoplasm. The enzyme catalyses 3-methyl-2-oxobutanoate + (6R)-5,10-methylene-5,6,7,8-tetrahydrofolate + H2O = 2-dehydropantoate + (6S)-5,6,7,8-tetrahydrofolate. The protein operates within cofactor biosynthesis; (R)-pantothenate biosynthesis; (R)-pantoate from 3-methyl-2-oxobutanoate: step 1/2. Catalyzes the reversible reaction in which hydroxymethyl group from 5,10-methylenetetrahydrofolate is transferred onto alpha-ketoisovalerate to form ketopantoate. This Shewanella loihica (strain ATCC BAA-1088 / PV-4) protein is 3-methyl-2-oxobutanoate hydroxymethyltransferase.